The following is a 160-amino-acid chain: Cytochrome b6-f complex subunit 4 (160 aa).

The next 3 helical transmembrane spans lie at 36 to 56 (LLYMFPVVILGTLFCLVSLAV), 95 to 115 (LIGILLMAGVPVGLATVPFIE), and 131 to 151 (AVFLFGTLVAIWLGIGATLPI).

It belongs to the cytochrome b family. PetD subfamily. The 4 large subunits of the cytochrome b6-f complex are cytochrome b6, subunit IV (17 kDa polypeptide, petD), cytochrome f and the Rieske protein, while the 4 small subunits are petG, petL, petM and petN. The complex functions as a dimer.

It is found in the plastid. The protein resides in the chloroplast thylakoid membrane. In terms of biological role, component of the cytochrome b6-f complex, which mediates electron transfer between photosystem II (PSII) and photosystem I (PSI), cyclic electron flow around PSI, and state transitions. This is Cytochrome b6-f complex subunit 4 from Bigelowiella natans (Pedinomonas minutissima).